The chain runs to 259 residues: Probable metal transport system ATP-binding protein TC_0339 (259 aa).

The 233-residue stretch at 9–241 (WAVDDLCVNY…AIFQAYGCEL (233 aa)) folds into the ABC transporter domain. 41–48 (GPNGAGKS) contacts ATP.

The protein belongs to the ABC transporter superfamily.

The protein resides in the cell inner membrane. Its function is as follows. Part of an ATP-driven transport system TC_0338/TC_0339/TC_0341/TC_0342 for a metal. Probably responsible for energy coupling to the transport system. This is Probable metal transport system ATP-binding protein TC_0339 from Chlamydia muridarum (strain MoPn / Nigg).